The primary structure comprises 380 residues: Kappa-type opioid receptor (380 aa).

The Extracellular segment spans residues 1 to 57 (MDSPIQIFRGEPGPTCAPSACLPPNSSAWFPGWAEPDSNGSAGSEDAQLEPAHISPA). Residues N25 and N39 are each glycosylated (N-linked (GlcNAc...) asparagine). The helical transmembrane segment at 58–85 (IPVIITAVYSVVFVVGLVGNSLVMFVII) threads the bilayer. Topologically, residues 86 to 95 (RYTKMKTATN) are cytoplasmic. A helical transmembrane segment spans residues 96-119 (IYIFNLALADALVTTTMPFQSTVY). At 120–132 (LMNSWPFGDVLCK) the chain is on the extracellular side. A disulfide bond links C131 and C210. Residues 133 to 154 (IVISIDYYNMFTSIFTLTMMSV) traverse the membrane as a helical segment. Topologically, residues 155–173 (DRYIAVCHPVKALDFRTPL) are cytoplasmic. The chain crosses the membrane as a helical span at residues 174–196 (KAKIINICIWLLSSSVGISAIVL). At 197–222 (GGTKVREDVDVIECSLQFPDDDYSWW) the chain is on the extracellular side. Residues 223-247 (DLFMKICVFIFAFVIPVLIIIVCYT) form a helical membrane-spanning segment. Over 248–274 (LMILRLKSVRLLSGSREKDRNLRRITR) the chain is Cytoplasmic. Residues 275–296 (LVLVVVAVFVVCWTPIHIFILV) traverse the membrane as a helical segment. The Extracellular segment spans residues 297–311 (EALGSTSHSTAALSS). Residues 312-333 (YYFCIALGYTNSSLNPILYAFL) traverse the membrane as a helical segment. At 334 to 380 (DENFKRCFRDFCFPLKMRMERQSTSRVRNTVQDPAYLRDIDGMNKPV) the chain is on the cytoplasmic side. C345 is lipidated: S-palmitoyl cysteine.

The protein belongs to the G-protein coupled receptor 1 family. Interacts with NHERF1. Interacts with GABARAPL1. As to expression, detected in brain and placenta.

It localises to the cell membrane. Its function is as follows. G-protein coupled opioid receptor that functions as a receptor for endogenous alpha-neoendorphins and dynorphins, but has low affinity for beta-endorphins. Also functions as a receptor for various synthetic opioids and for the psychoactive diterpene salvinorin A. Ligand binding causes a conformation change that triggers signaling via guanine nucleotide-binding proteins (G proteins) and modulates the activity of down-stream effectors, such as adenylate cyclase. Signaling leads to the inhibition of adenylate cyclase activity. Inhibits neurotransmitter release by reducing calcium ion currents and increasing potassium ion conductance. Plays a role in the perception of pain. Plays a role in mediating reduced physical activity upon treatment with synthetic opioids. Plays a role in the regulation of salivation in response to synthetic opioids. May play a role in arousal and regulation of autonomic and neuroendocrine functions. In Homo sapiens (Human), this protein is Kappa-type opioid receptor (OPRK1).